The primary structure comprises 169 residues: Large ribosomal subunit protein bL17 (169 aa).

A disordered region spans residues 124–169 (EKAVKRQDRSRRVKGSKKAIDEKTSDDSASVEAAPAAPEAEEKKDA). A compositionally biased stretch (basic residues) spans 131–140 (DRSRRVKGSK). Over residues 150-161 (DSASVEAAPAAP) the composition is skewed to low complexity.

This sequence belongs to the bacterial ribosomal protein bL17 family. Part of the 50S ribosomal subunit. Contacts protein L32.

In Chloroherpeton thalassium (strain ATCC 35110 / GB-78), this protein is Large ribosomal subunit protein bL17.